We begin with the raw amino-acid sequence, 555 residues long: MTSRTRHCARLGIVLLGICCIASGIYLFRNWIDMFTRMRGQEMALSPNSRSFEGWKVSPLPLDFDIYLFNWTNPDDFYVGSNKKPHFEQLGPYRFREKPDKVDIEWHNHNASVSFHKKSWFYFDAAGSNGSLWDKVTTVNSVAHSAARRAAVDWFARTGVNIANKLYRQGVTITKTVDEMLFKGYEHPFISVGKLLRPQDVPYKRIGYHYPRNGSSEFDGDINMFTGADDIAKMGQIHTWNNLTHTGAFEGTCGQVHGSMGEFFPPNLGTKDTVYMYMPKMCRAIPLDYVETVTVHGVTAYKFSGTRHAVDNGTLYPDTRCYCVGGKCMPSGVINIGPCSFNASVYMSFPHFYMADPSYLEAIEGLRPEREKHEFFMALEPNAGVPMDVGGGFQANYYMEPIPGITLYENVPTVMIPMMWCEERVRVSEEIAADIALVPLIVLLGQIVTGILLAGGLICTCWYPTRQVTHFCHSDPKAKASVLRPLNAFGVNSSAATAPVAQLFRNNISSSGNERVGVRLLDYNRDSGIRLESGTMESSHRERLISEDSPDVVVR.

At 1-7 (MTSRTRH) the chain is on the cytoplasmic side. Residues 8–28 (CARLGIVLLGICCIASGIYLF) traverse the membrane as a helical segment. The Extracellular segment spans residues 29–434 (RNWIDMFTRM…VRVSEEIAAD (406 aa)). N70, N110, N129, N213, N242, N312, and N342 each carry an N-linked (GlcNAc...) asparagine glycan. The helical transmembrane segment at 435–455 (IALVPLIVLLGQIVTGILLAG) threads the bilayer. Topologically, residues 456 to 555 (GLICTCWYPT…SEDSPDVVVR (100 aa)) are cytoplasmic.

It belongs to the CD36 family.

It localises to the cell membrane. Functionally, (Microbial infection) Plays a role in mycobacterial infection. Mediates infection by M.fortuitum and uptake of M.smegmatis. This chain is Protein peste, found in Drosophila melanogaster (Fruit fly).